We begin with the raw amino-acid sequence, 514 residues long: MSVLWMVLGLAIGIAVGAAAGYIVCRSRTDRRLAETRADARSIIEDANRQAETLRREAELAAKEAAMRIKDEAEAEVRARRAEISRIEERLDNRDTALDRREVELDERRRRLSETEDELRRREESLAEREQEQLRALEEISGLSRAEAEERLFSRVEAELERRIGRMVRNRISEAEENADLEARRILATTMERLASDLTSESTVKAVELPSDDMKGRVIGREGRNIRAFEAATGVDVIIDDTPETVVLSCFDPVRREVARIAMERLVKDGRIHPGRIEQVVAKVRKEVEKEMKAAGRQALYDAKVSGSMHGDLLRLLGALKYRSSYGQNVLAHSVEVANIAGMMAQELGANVKIARRAALLHDVGKAIDHEAEGTHALIGGRFAKKCGESDEVVRAISAHHHEVEMQTVEDVIVATADAVSAARPGARRETTEVYLERLRNLEDIALSHRGVDKAYAIQAGREIRVMVQPSEVDDRIAAKLAYDISRKIEDELEYPGQIKVTVIRESRVSEVAR.

A helical transmembrane segment spans residues 3–23; that stretch reads VLWMVLGLAIGIAVGAAAGYI. Residues 203–266 enclose the KH domain; the sequence is TVKAVELPSD…EVARIAMERL (64 aa). In terms of domain architecture, HD spans 330–423; it reads VLAHSVEVAN…VATADAVSAA (94 aa).

Belongs to the RNase Y family.

The protein resides in the cell membrane. Endoribonuclease that initiates mRNA decay. This chain is Ribonuclease Y, found in Rubrobacter xylanophilus (strain DSM 9941 / JCM 11954 / NBRC 16129 / PRD-1).